Reading from the N-terminus, the 583-residue chain is Aspartate--tRNA ligase (583 aa).

E173 provides a ligand contact to L-aspartate. Residues 197–200 (QLFK) form an aspartate region. L-aspartate is bound at residue R219. Residues 219–221 (RDE) and Q228 contribute to the ATP site. H444 serves as a coordination point for L-aspartate. An ATP-binding site is contributed by E478. R485 contacts L-aspartate. ATP is bound at residue 530–533 (GLDR).

It belongs to the class-II aminoacyl-tRNA synthetase family. Type 1 subfamily. Homodimer.

The protein resides in the cytoplasm. It catalyses the reaction tRNA(Asp) + L-aspartate + ATP = L-aspartyl-tRNA(Asp) + AMP + diphosphate. Its function is as follows. Catalyzes the attachment of L-aspartate to tRNA(Asp) in a two-step reaction: L-aspartate is first activated by ATP to form Asp-AMP and then transferred to the acceptor end of tRNA(Asp). In Azobacteroides pseudotrichonymphae genomovar. CFP2, this protein is Aspartate--tRNA ligase.